A 150-amino-acid polypeptide reads, in one-letter code: Monothiol glutaredoxin-5, mitochondrial (150 aa).

The transit peptide at 1-29 directs the protein to the mitochondrion; it reads MFLPKFNPIRSFSPILRAKTLLRYQNRMY. One can recognise a Glutaredoxin domain in the interval 35–140; it reads RKAIEDAIES…DLLEEAQALV (106 aa). Residue Lys52 participates in glutathione binding. Cys60 is a [2Fe-2S] cluster binding site. Glutathione-binding positions include 92–96, Ile104, and 117–118; these read REGIK and CD.

It belongs to the glutaredoxin family. Monothiol subfamily. Homodimer. Interacts with SSQ1. Interacts with BOL1.

It is found in the mitochondrion matrix. In terms of biological role, monothiol glutaredoxin involved in mitochondrial iron-sulfur (Fe/S) cluster transfer. Receives 2Fe/2S clusters from scaffold protein ISU1 and mediates their transfer to apoproteins, to the 4Fe/FS cluster biosynthesis machinery, or export from mitochondrion. In Saccharomyces cerevisiae (strain ATCC 204508 / S288c) (Baker's yeast), this protein is Monothiol glutaredoxin-5, mitochondrial.